A 382-amino-acid chain; its full sequence is 2-heptyl-3-hydroxy-4(1H)-quinolone synthase (382 aa).

This sequence belongs to the 3-hydroxybenzoate 6-hydroxylase family.

It carries out the reaction 2-heptyl-4(1H)-quinolone + NADH + O2 + H(+) = 2-heptyl-3-hydroxy-4(1H)-quinolone + NAD(+) + H2O. Involved in the terminal step of the biosynthesis of quinolone which in addition to serve as a potent signal for quorum sensing, chelates iron and promotes the formation of membrane vesicles (MVs). Catalyzes the hydroxylation of 2-heptyl-4-quinolone (C7-HHQ) to yield 2-heptyl-3-hydroxy-4-quinolone (PQS). The protein is 2-heptyl-3-hydroxy-4(1H)-quinolone synthase (pqsH) of Pseudomonas aeruginosa (strain ATCC 15692 / DSM 22644 / CIP 104116 / JCM 14847 / LMG 12228 / 1C / PRS 101 / PAO1).